A 348-amino-acid polypeptide reads, in one-letter code: 4-hydroxy-3-methylbut-2-en-1-yl diphosphate synthase (flavodoxin) (348 aa).

The [4Fe-4S] cluster site is built by Cys263, Cys266, Cys298, and Glu305.

Belongs to the IspG family. [4Fe-4S] cluster is required as a cofactor.

It carries out the reaction (2E)-4-hydroxy-3-methylbut-2-enyl diphosphate + oxidized [flavodoxin] + H2O + 2 H(+) = 2-C-methyl-D-erythritol 2,4-cyclic diphosphate + reduced [flavodoxin]. It participates in isoprenoid biosynthesis; isopentenyl diphosphate biosynthesis via DXP pathway; isopentenyl diphosphate from 1-deoxy-D-xylulose 5-phosphate: step 5/6. Its function is as follows. Converts 2C-methyl-D-erythritol 2,4-cyclodiphosphate (ME-2,4cPP) into 1-hydroxy-2-methyl-2-(E)-butenyl 4-diphosphate. The polypeptide is 4-hydroxy-3-methylbut-2-en-1-yl diphosphate synthase (flavodoxin) (Dehalococcoides mccartyi (strain CBDB1)).